Here is a 563-residue protein sequence, read N- to C-terminus: Phospholipase B-like protein F (563 aa).

A signal peptide spans 1-21 (MKIINSFVFIFVLLFVFNTNA). N-linked (GlcNAc...) asparagine glycosylation is found at Asn85, Asn107, Asn118, Asn121, Asn208, Asn312, and Asn537.

It belongs to the phospholipase B-like family.

It is found in the secreted. Its function is as follows. Probable phospholipase. The sequence is that of Phospholipase B-like protein F (plbF) from Dictyostelium discoideum (Social amoeba).